We begin with the raw amino-acid sequence, 294 residues long: Protoheme IX farnesyltransferase (294 aa).

Transmembrane regions (helical) follow at residues 25–45 (SLVL…MGAV), 48–68 (LVTL…NCYW), 92–112 (AVAL…LALG), 115–135 (VLTA…YTPL), 141–161 (AAML…WTAV), 170–190 (FSLF…IALF), 216–236 (VVLY…LHIA), 240–260 (YLAA…WGFF), and 272–292 (FFFS…DRVP).

This sequence belongs to the UbiA prenyltransferase family. Protoheme IX farnesyltransferase subfamily.

It localises to the cell inner membrane. The enzyme catalyses heme b + (2E,6E)-farnesyl diphosphate + H2O = Fe(II)-heme o + diphosphate. It participates in porphyrin-containing compound metabolism; heme O biosynthesis; heme O from protoheme: step 1/1. In terms of biological role, converts heme B (protoheme IX) to heme O by substitution of the vinyl group on carbon 2 of heme B porphyrin ring with a hydroxyethyl farnesyl side group. This is Protoheme IX farnesyltransferase from Myxococcus xanthus (strain DK1622).